Here is an 87-residue protein sequence, read N- to C-terminus: Putative defensin-like protein 304 (87 aa).

The first 19 residues, methionine 1–cysteine 19, serve as a signal peptide directing secretion. Cystine bridges form between cysteine 27-cysteine 46, cysteine 33-cysteine 51, and cysteine 40-cysteine 53.

It belongs to the DEFL family.

The protein localises to the secreted. This chain is Putative defensin-like protein 304, found in Arabidopsis thaliana (Mouse-ear cress).